A 173-amino-acid polypeptide reads, in one-letter code: Adenine phosphoribosyltransferase (173 aa).

This sequence belongs to the purine/pyrimidine phosphoribosyltransferase family. As to quaternary structure, homodimer.

It is found in the cytoplasm. The enzyme catalyses AMP + diphosphate = 5-phospho-alpha-D-ribose 1-diphosphate + adenine. It functions in the pathway purine metabolism; AMP biosynthesis via salvage pathway; AMP from adenine: step 1/1. Catalyzes a salvage reaction resulting in the formation of AMP, that is energically less costly than de novo synthesis. The chain is Adenine phosphoribosyltransferase from Solibacter usitatus (strain Ellin6076).